Reading from the N-terminus, the 445-residue chain is Glycine--tRNA ligase (445 aa).

Substrate-binding residues include arginine 97 and glutamate 145. ATP is bound by residues 177–179 (RNE), 187–192 (FRTCEF), 262–263 (EI), and 308–311 (GLTR). Residue 192–196 (FEQME) participates in substrate binding. 304-308 (ETSAG) serves as a coordination point for substrate.

Belongs to the class-II aminoacyl-tRNA synthetase family. As to quaternary structure, homodimer.

The protein localises to the cytoplasm. The catalysed reaction is tRNA(Gly) + glycine + ATP = glycyl-tRNA(Gly) + AMP + diphosphate. Catalyzes the attachment of glycine to tRNA(Gly). The sequence is that of Glycine--tRNA ligase from Borreliella afzelii (strain PKo) (Borrelia afzelii).